Here is a 132-residue protein sequence, read N- to C-terminus: Small ribosomal subunit protein uS8 (132 aa).

The protein belongs to the universal ribosomal protein uS8 family. Part of the 30S ribosomal subunit. Contacts proteins S5 and S12.

In terms of biological role, one of the primary rRNA binding proteins, it binds directly to 16S rRNA central domain where it helps coordinate assembly of the platform of the 30S subunit. The polypeptide is Small ribosomal subunit protein uS8 (Kocuria rhizophila (strain ATCC 9341 / DSM 348 / NBRC 103217 / DC2201)).